The primary structure comprises 163 residues: Succinate dehydrogenase assembly factor 2, mitochondrial (163 aa).

The protein belongs to the SDHAF2 family. Interacts with the flavoprotein subunit within the SDH catalytic dimer.

It localises to the mitochondrion matrix. In terms of biological role, plays an essential role in the assembly of succinate dehydrogenase (SDH), an enzyme complex (also referred to as respiratory complex II) that is a component of both the tricarboxylic acid (TCA) cycle and the mitochondrial electron transport chain, and which couples the oxidation of succinate to fumarate with the reduction of ubiquinone (coenzyme Q) to ubiquinol. Required for flavinylation (covalent attachment of FAD) of the flavoprotein subunit of the SDH catalytic dimer. The chain is Succinate dehydrogenase assembly factor 2, mitochondrial from Kluyveromyces lactis (strain ATCC 8585 / CBS 2359 / DSM 70799 / NBRC 1267 / NRRL Y-1140 / WM37) (Yeast).